The following is a 154-amino-acid chain: MAARLYCQLDPSRDVLCLRPVGAESRGRPLSGPLGTLSSPSPSAVPADHGAHLSLRGLPVCAFSSAGPCALRFTSARCMETTVNAHQILPKVLHKRTLGLPAMSTTDLEAYFKDCVFKDWEELGEEIRLKVFVLGGCRHKLVCAPAPCNFFTSA.

The interval 68–117 (PCALRFTSARCMETTVNAHQILPKVLHKRTLGLPAMSTTDLEAYFKDCVF) is mitochondrial targeting sequence.

The protein belongs to the orthohepadnavirus protein X family. As to quaternary structure, may form homodimer. May interact with host CEBPA, CFLAR, CREB1, DDB1, E4F1, HBXIP, HSPD1/HSP60, NFKBIA, POLR2E and SMAD4. Interacts with host SMC5-SMC6 complex and induces its degradation. Interacts with host TRPC4AP; leading to prevent ubiquitination of TRPC4AP. Interacts with host PLSCR1; this interaction promotes ubiquitination and degradation of HBx and impairs HBx-mediated cell proliferation. Post-translationally, a fraction may be phosphorylated in insect cells and HepG2 cells, a human hepatoblastoma cell line. Phosphorylated in vitro by host protein kinase C or mitogen-activated protein kinase. N-acetylated in insect cells.

Its subcellular location is the host cytoplasm. It localises to the host nucleus. The protein localises to the host mitochondrion. Functionally, multifunctional protein that plays a role in silencing host antiviral defenses and promoting viral transcription. Does not seem to be essential for HBV infection. May be directly involved in development of cirrhosis and liver cancer (hepatocellular carcinoma). Most of cytosolic activities involve modulation of cytosolic calcium. The effect on apoptosis is controversial depending on the cell types in which the studies have been conducted. May induce apoptosis by localizing in mitochondria and causing loss of mitochondrial membrane potential. May also modulate apoptosis by binding host CFLAR, a key regulator of the death-inducing signaling complex (DISC). Promotes viral transcription by using the host E3 ubiquitin ligase DDB1 to target the SMC5-SMC6 complex to proteasomal degradation. This host complex would otherwise bind to viral episomal DNA, and prevents its transcription. Moderately stimulates transcription of many different viral and cellular transcription elements. Promoters and enhancers stimulated by HBx contain DNA binding sites for NF-kappa-B, AP-1, AP-2, c-EBP, ATF/CREB, or the calcium-activated factor NF-AT. This chain is Protein X, found in Hepatitis B virus genotype A2 subtype adw2 (strain Rutter 1979) (HBV-A).